A 102-amino-acid polypeptide reads, in one-letter code: Small ribosomal subunit protein uS10 (102 aa).

The protein belongs to the universal ribosomal protein uS10 family. In terms of assembly, part of the 30S ribosomal subunit.

Its function is as follows. Involved in the binding of tRNA to the ribosomes. The polypeptide is Small ribosomal subunit protein uS10 (Streptococcus equi subsp. zooepidemicus (strain MGCS10565)).